Consider the following 436-residue polypeptide: Exodeoxyribonuclease 7 large subunit (436 aa).

Residues 412–436 (PGGVMNKNSNTTDSTDNTENGTGEA) form a disordered region. Low complexity predominate over residues 417 to 436 (NKNSNTTDSTDNTENGTGEA).

This sequence belongs to the XseA family. Heterooligomer composed of large and small subunits.

The protein localises to the cytoplasm. It carries out the reaction Exonucleolytic cleavage in either 5'- to 3'- or 3'- to 5'-direction to yield nucleoside 5'-phosphates.. Its function is as follows. Bidirectionally degrades single-stranded DNA into large acid-insoluble oligonucleotides, which are then degraded further into small acid-soluble oligonucleotides. This is Exodeoxyribonuclease 7 large subunit from Corynebacterium jeikeium (strain K411).